The chain runs to 205 residues: Small ribosomal subunit protein uS4 (205 aa).

Residues 18 to 49 (NIWGRPKSPVNKREYGPGQHGQRRKGKLSDFG) are disordered. The S4 RNA-binding domain occupies 94–157 (RRLDTVVYRA…KQLALVLEAN (64 aa)).

Belongs to the universal ribosomal protein uS4 family. As to quaternary structure, part of the 30S ribosomal subunit. Contacts protein S5. The interaction surface between S4 and S5 is involved in control of translational fidelity.

In terms of biological role, one of the primary rRNA binding proteins, it binds directly to 16S rRNA where it nucleates assembly of the body of the 30S subunit. Its function is as follows. With S5 and S12 plays an important role in translational accuracy. The sequence is that of Small ribosomal subunit protein uS4 from Nitrobacter winogradskyi (strain ATCC 25391 / DSM 10237 / CIP 104748 / NCIMB 11846 / Nb-255).